The sequence spans 283 residues: Para-Rep C10 (283 aa).

Residues Ser3 to Trp96 form the CRESS-DNA virus Rep endonuclease domain. The short motif at Cys10–Leu13 is the RCR-1 element. A divalent metal cation is bound by residues Glu36 and His42. Positions His42 to Gln44 match the RCR-2 motif. The short motif at Lys51–Arg71 is the Nuclear localization signal element. Tyr79 acts as the For DNA cleavage activity in catalysis. The RCR-3 motif lies at Tyr79–Lys82. Glu84 provides a ligand contact to a divalent metal cation. Residues Trp96–His102 carry the Nuclear localization signal motif. ATP is bound at residue Gly172–Ser180.

The protein belongs to the nanoviridea/circoviridae replication-associated protein family. In terms of assembly, homooligomer (Potential). Rep binds to repeated DNA motifs (iterons). Requires Mg(2+) as cofactor. Mn(2+) serves as cofactor.

The protein localises to the host nucleus. It catalyses the reaction ATP + H2O = ADP + phosphate + H(+). Initiates and terminates the replication only of its own subviral DNA molecule. The closed circular ssDNA genome is first converted to a superhelical dsDNA. Rep binds a specific hairpin at the genome origin of replication. Introduces an endonucleolytic nick within the intergenic region of the genome, thereby initiating the rolling circle replication (RCR). Following cleavage, binds covalently to the 5'-phosphate of DNA as a tyrosyl ester. The cleavage gives rise to a free 3'-OH that serves as a primer for the cellular DNA polymerase. The polymerase synthesizes the (+) strand DNA by rolling circle mechanism. After one round of replication, a Rep-catalyzed nucleotidyl transfer reaction releases a circular single-stranded virus genome, thereby terminating the replication. Displays origin-specific DNA cleavage, nucleotidyl transferase, ATPase and helicase activities. This is Para-Rep C10 (C10) from Milk vetch dwarf C10 alphasatellite (MVDC10A).